The sequence spans 1085 residues: DNA-directed RNA polymerase subunit beta (1085 aa).

It belongs to the RNA polymerase beta chain family. As to quaternary structure, in plastids the minimal PEP RNA polymerase catalytic core is composed of four subunits: alpha, beta, beta', and beta''. When a (nuclear-encoded) sigma factor is associated with the core the holoenzyme is formed, which can initiate transcription.

The protein resides in the plastid. Its subcellular location is the chloroplast. The catalysed reaction is RNA(n) + a ribonucleoside 5'-triphosphate = RNA(n+1) + diphosphate. Functionally, DNA-dependent RNA polymerase catalyzes the transcription of DNA into RNA using the four ribonucleoside triphosphates as substrates. This chain is DNA-directed RNA polymerase subunit beta, found in Physcomitrium patens (Spreading-leaved earth moss).